We begin with the raw amino-acid sequence, 493 residues long: Putative trans-acting regulator SP_1800 (493 aa).

It belongs to the AtxA/AcpA family.

In Streptococcus pneumoniae serotype 4 (strain ATCC BAA-334 / TIGR4), this protein is Putative trans-acting regulator SP_1800.